Here is a 490-residue protein sequence, read N- to C-terminus: Nicotinate phosphoribosyltransferase (490 aa).

His206 carries the post-translational modification Phosphohistidine.

The protein belongs to the NAPRTase family. Post-translationally, transiently phosphorylated on a His residue during the reaction cycle. Phosphorylation strongly increases the affinity for substrates and increases the rate of nicotinate D-ribonucleotide production. Dephosphorylation regenerates the low-affinity form of the enzyme, leading to product release.

It catalyses the reaction nicotinate + 5-phospho-alpha-D-ribose 1-diphosphate + ATP + H2O = nicotinate beta-D-ribonucleotide + ADP + phosphate + diphosphate. It functions in the pathway cofactor biosynthesis; NAD(+) biosynthesis; nicotinate D-ribonucleotide from nicotinate: step 1/1. Its function is as follows. Catalyzes the synthesis of beta-nicotinate D-ribonucleotide from nicotinate and 5-phospho-D-ribose 1-phosphate at the expense of ATP. In Bacillus subtilis (strain 168), this protein is Nicotinate phosphoribosyltransferase (pncB).